The sequence spans 590 residues: Aspartate--tRNA ligase (590 aa).

Glutamate 174 is a binding site for L-aspartate. The tract at residues 198–201 is aspartate; it reads QLMK. An L-aspartate-binding site is contributed by arginine 220. Residues 220-222 and glutamine 229 contribute to the ATP site; that span reads RDE. Histidine 443 contributes to the L-aspartate binding site. Glutamate 484 is an ATP binding site. Arginine 491 contacts L-aspartate. Residue 536–539 participates in ATP binding; sequence GLDR.

This sequence belongs to the class-II aminoacyl-tRNA synthetase family. Type 1 subfamily. In terms of assembly, homodimer.

The protein resides in the cytoplasm. The catalysed reaction is tRNA(Asp) + L-aspartate + ATP = L-aspartyl-tRNA(Asp) + AMP + diphosphate. Its function is as follows. Catalyzes the attachment of L-aspartate to tRNA(Asp) in a two-step reaction: L-aspartate is first activated by ATP to form Asp-AMP and then transferred to the acceptor end of tRNA(Asp). In Lactococcus lactis subsp. cremoris (strain SK11), this protein is Aspartate--tRNA ligase.